The following is a 583-amino-acid chain: Isocitrate dehydrogenase kinase/phosphatase (583 aa).

ATP is bound by residues 315 to 321 (APGIRGM) and Lys336. The active site involves Asp371.

This sequence belongs to the AceK family.

It localises to the cytoplasm. The enzyme catalyses L-seryl-[isocitrate dehydrogenase] + ATP = O-phospho-L-seryl-[isocitrate dehydrogenase] + ADP + H(+). Bifunctional enzyme which can phosphorylate or dephosphorylate isocitrate dehydrogenase (IDH) on a specific serine residue. This is a regulatory mechanism which enables bacteria to bypass the Krebs cycle via the glyoxylate shunt in response to the source of carbon. When bacteria are grown on glucose, IDH is fully active and unphosphorylated, but when grown on acetate or ethanol, the activity of IDH declines drastically concomitant with its phosphorylation. The chain is Isocitrate dehydrogenase kinase/phosphatase from Salmonella enteritidis PT4 (strain P125109).